Reading from the N-terminus, the 473-residue chain is Photosystem II CP43 reaction center protein (473 aa).

The propeptide occupies 1 to 14 (MKTLYSLRRFYHVE). T15 bears the N-acetylthreonine mark. T15 carries the post-translational modification Phosphothreonine. Transmembrane regions (helical) follow at residues 69 to 93 (LFEV…PHLA), 134 to 155 (LIGP…KDKN), 178 to 200 (KACY…RIIT), 255 to 275 (KPWA…LSYS), and 291 to 312 (WFNN…ASQA). E367 is a binding site for [CaMn4O5] cluster. A helical transmembrane segment spans residues 447-471 (RARAAAAGFEKGIERETEPVLFMKP).

It belongs to the PsbB/PsbC family. PsbC subfamily. In terms of assembly, PSII is composed of 1 copy each of membrane proteins PsbA, PsbB, PsbC, PsbD, PsbE, PsbF, PsbH, PsbI, PsbJ, PsbK, PsbL, PsbM, PsbT, PsbX, PsbY, PsbZ, Psb30/Ycf12, at least 3 peripheral proteins of the oxygen-evolving complex and a large number of cofactors. It forms dimeric complexes. Requires Binds multiple chlorophylls and provides some of the ligands for the Ca-4Mn-5O cluster of the oxygen-evolving complex. It may also provide a ligand for a Cl- that is required for oxygen evolution. PSII binds additional chlorophylls, carotenoids and specific lipids. as cofactor.

Its subcellular location is the plastid. The protein resides in the chloroplast thylakoid membrane. In terms of biological role, one of the components of the core complex of photosystem II (PSII). It binds chlorophyll and helps catalyze the primary light-induced photochemical processes of PSII. PSII is a light-driven water:plastoquinone oxidoreductase, using light energy to abstract electrons from H(2)O, generating O(2) and a proton gradient subsequently used for ATP formation. In Mesostigma viride (Green alga), this protein is Photosystem II CP43 reaction center protein.